A 570-amino-acid polypeptide reads, in one-letter code: Spastin (570 aa).

Over 1–35 (MNSGHKARLRGGRACGPVSDGSARGNRLLFYTRSL) the chain is Cytoplasmic. The segment at residues 36–52 (SRVPEWLLRVLLLLLRW) is an intramembrane region (helical). Residues 53–570 (LFQPIRRAMA…NREYGDTTGV (518 aa)) lie on the Cytoplasmic side of the membrane. Positions 83–158 (YHKQAFEFIS…SMAEDRLKLL (76 aa)) constitute an MIT domain. Residues 186–269 (APASGAVSKK…SPQRKRDMKN (84 aa)) are disordered. Composition is skewed to polar residues over residues 199 to 208 (LTITNQTSLR), 216 to 242 (TPNASGLNCTPSAAQSSRTGPQNNQKG), and 251 to 261 (VKASTTATASP). 335 to 342 (GPPGNGKT) is an ATP binding site.

Belongs to the AAA ATPase family. Spastin subfamily. Homohexamer. The homohexamer is stabilized by ATP-binding. The homohexamer may adopt a ring conformation through which microtubules pass prior to being severed. Interacts with microtubules.

The protein localises to the membrane. It is found in the cytoplasm. It localises to the cytoskeleton. The protein resides in the microtubule organizing center. Its subcellular location is the centrosome. The protein localises to the perinuclear region. It is found in the nucleus. The enzyme catalyses n ATP + n H2O + a microtubule = n ADP + n phosphate + (n+1) alpha/beta tubulin heterodimers.. Functionally, ATP-dependent microtubule severing protein that specifically recognizes and cuts microtubules that are polyglutamylated. Preferentially recognizes and acts on microtubules decorated with short polyglutamate tails: severing activity increases as the number of glutamates per tubulin rises from one to eight, but decreases beyond this glutamylation threshold. Microtubule severing promotes reorganization of cellular microtubule arrays and the release of microtubules from the centrosome following nucleation. Required for membrane traffic from the endoplasmic reticulum (ER) to the Golgi and for completion of the abscission stage of cytokinesis. Also plays a role in axon growth and the formation of axonal branches. The polypeptide is Spastin (Danio rerio (Zebrafish)).